Reading from the N-terminus, the 159-residue chain is Defense protein l(2)34Fc (159 aa).

A signal peptide spans 1-17 (MFRLLVLAACLAISVHA). The region spanning 18–159 (YSDGAPKAAC…GRVTKDIDVE (142 aa)) is the Reelin domain. A disulfide bond links C27 and C99.

The protein belongs to the insect defense protein family.

The protein resides in the secreted. In terms of biological role, may have antimicrobial activity. A late response immune regulated gene that is negatively regulated by spz during the immune response. The protein is Defense protein l(2)34Fc (l(2)34Fc) of Drosophila melanogaster (Fruit fly).